The sequence spans 137 residues: Nucleoside diphosphate kinase (137 aa).

ATP-binding residues include Lys10, Phe59, Arg87, Thr93, Arg104, and Asn114. His117 functions as the Pros-phosphohistidine intermediate in the catalytic mechanism.

This sequence belongs to the NDK family. In terms of assembly, homotetramer. The cofactor is Mg(2+).

Its subcellular location is the cytoplasm. The catalysed reaction is a 2'-deoxyribonucleoside 5'-diphosphate + ATP = a 2'-deoxyribonucleoside 5'-triphosphate + ADP. The enzyme catalyses a ribonucleoside 5'-diphosphate + ATP = a ribonucleoside 5'-triphosphate + ADP. Major role in the synthesis of nucleoside triphosphates other than ATP. The ATP gamma phosphate is transferred to the NDP beta phosphate via a ping-pong mechanism, using a phosphorylated active-site intermediate. This is Nucleoside diphosphate kinase from Streptomyces avermitilis (strain ATCC 31267 / DSM 46492 / JCM 5070 / NBRC 14893 / NCIMB 12804 / NRRL 8165 / MA-4680).